A 114-amino-acid chain; its full sequence is Phosphoribosyl-AMP cyclohydrolase (114 aa).

Residue aspartate 76 participates in Mg(2+) binding. Position 77 (cysteine 77) interacts with Zn(2+). Mg(2+) contacts are provided by aspartate 78 and aspartate 80. 2 residues coordinate Zn(2+): cysteine 93 and cysteine 100.

This sequence belongs to the PRA-CH family. As to quaternary structure, homodimer. Mg(2+) is required as a cofactor. Requires Zn(2+) as cofactor.

It localises to the cytoplasm. The enzyme catalyses 1-(5-phospho-beta-D-ribosyl)-5'-AMP + H2O = 1-(5-phospho-beta-D-ribosyl)-5-[(5-phospho-beta-D-ribosylamino)methylideneamino]imidazole-4-carboxamide. Its pathway is amino-acid biosynthesis; L-histidine biosynthesis; L-histidine from 5-phospho-alpha-D-ribose 1-diphosphate: step 3/9. In terms of biological role, catalyzes the hydrolysis of the adenine ring of phosphoribosyl-AMP. The polypeptide is Phosphoribosyl-AMP cyclohydrolase (Streptococcus sanguinis (strain SK36)).